We begin with the raw amino-acid sequence, 283 residues long: Polyamine aminopropyltransferase (283 aa).

Positions 5 to 241 (NNWYIEHFER…GWWSVTMARK (237 aa)) constitute a PABS domain. Gln35 is a binding site for S-methyl-5'-thioadenosine. Residues His66 and Asp90 each contribute to the spermidine site. Residues Asp110 and 141–142 (DG) each bind S-methyl-5'-thioadenosine. Asp160 serves as the catalytic Proton acceptor. A spermidine-binding site is contributed by 160-163 (DSTD). Residue Pro167 participates in S-methyl-5'-thioadenosine binding.

The protein belongs to the spermidine/spermine synthase family. As to quaternary structure, homodimer or homotetramer.

It is found in the cytoplasm. The catalysed reaction is S-adenosyl 3-(methylsulfanyl)propylamine + putrescine = S-methyl-5'-thioadenosine + spermidine + H(+). It participates in amine and polyamine biosynthesis; spermidine biosynthesis; spermidine from putrescine: step 1/1. Its function is as follows. Catalyzes the irreversible transfer of a propylamine group from the amino donor S-adenosylmethioninamine (decarboxy-AdoMet) to putrescine (1,4-diaminobutane) to yield spermidine. The polypeptide is Polyamine aminopropyltransferase (Stenotrophomonas maltophilia (strain K279a)).